The following is a 745-amino-acid chain: Ribosomal protein S6 kinase alpha-6 (745 aa).

The interval 1–28 (MLPFAPQDEPWDREMEVFSGGGASSGEV) is disordered. The 258-residue stretch at 73 to 330 (FELLKVLGQG…VEEIKRHLFF (258 aa)) folds into the Protein kinase 1 domain. ATP is bound by residues 79 to 87 (LGQGSFGKV) and Lys105. The active-site Proton acceptor is Asp198. Phosphoserine is present on residues Ser232, Ser372, and Ser389. The region spanning 331–400 (ANIDWDKLYK…VATSIAEEYK (70 aa)) is the AGC-kinase C-terminal domain. The region spanning 426-683 (YELKEDIGVG…AEQILKHSWI (258 aa)) is the Protein kinase 2 domain. ATP-binding positions include 432–440 (IGVGSYSVC) and Lys455. Residue Asp543 is the Proton acceptor of the active site. Thr581 bears the Phosphothreonine mark.

It belongs to the protein kinase superfamily. AGC Ser/Thr protein kinase family. S6 kinase subfamily. In terms of assembly, forms a complex with MAPK3/ERK1 but not with MAPK9 or MAPK14 in serum-starved cells. Mg(2+) is required as a cofactor. Phosphorylated at Ser-232, Ser-372, and Ser-389 in serum-starved cells.

The protein resides in the cytoplasm. The protein localises to the cytosol. Its subcellular location is the nucleus. The catalysed reaction is L-seryl-[protein] + ATP = O-phospho-L-seryl-[protein] + ADP + H(+). It carries out the reaction L-threonyl-[protein] + ATP = O-phospho-L-threonyl-[protein] + ADP + H(+). Its activity is regulated as follows. Constitutively activated by phosphorylation at Ser-232, Ser-372, and Ser-389 in serum-starved cells. Does not require growth factor stimulation for significant kinase activity. Functionally, constitutively active serine/threonine-protein kinase that exhibits growth-factor-independent kinase activity and that may participate in p53/TP53-dependent cell growth arrest signaling and play an inhibitory role during embryogenesis. This chain is Ribosomal protein S6 kinase alpha-6 (RPS6KA6), found in Homo sapiens (Human).